The sequence spans 107 residues: MARTKVHVRKGDTVLVITGKNAGKKGKVISVIPAKSRVVVEGVNVVKRHTKPTRKMPQGGIVEKEAPIHSSNVMLFCGKCNSPTRVGKKFLEDGEKVRVCKRCGETI.

It belongs to the universal ribosomal protein uL24 family. Part of the 50S ribosomal subunit.

Its function is as follows. One of two assembly initiator proteins, it binds directly to the 5'-end of the 23S rRNA, where it nucleates assembly of the 50S subunit. One of the proteins that surrounds the polypeptide exit tunnel on the outside of the subunit. This chain is Large ribosomal subunit protein uL24, found in Pelotomaculum thermopropionicum (strain DSM 13744 / JCM 10971 / SI).